A 311-amino-acid chain; its full sequence is ADP-ribosyl cyclase/cyclic ADP-ribose hydrolase 2 (311 aa).

Residues 1-24 form the signal peptide; sequence MAVQGGLLSLWLWLWLSLLTVLLG. 3 cysteine pairs are disulfide-bonded: Cys46–Cys60, Cys76–Cys156, and Cys137–Cys150. N-linked (GlcNAc...) asparagine glycosylation is found at Asn59 and Asn88. Residue Trp102 coordinates NAD(+). Residue Trp102 participates in nicotinamide binding. The N-linked (GlcNAc...) asparagine glycan is linked to Asn141. Trp165 serves as a coordination point for NAD(+). N-linked (GlcNAc...) asparagine glycosylation occurs at Asn185. Glu203 serves as a coordination point for NAD(+). Disulfide bonds link Cys231–Cys252 and Cys264–Cys273. A lipid anchor (GPI-anchor amidated serine) is attached at Ser286. The propeptide occupies 287 to 311; it reads ASLHAIGDASLLISLLVALASSSQA.

It belongs to the ADP-ribosyl cyclase family. Homodimer. In terms of tissue distribution, expressed in the bone marrow, spleen and thymus in lymphoid organs, and the lung, kidney and heart in non-lymphoid organs.

Its subcellular location is the cell membrane. It catalyses the reaction NAD(+) + H2O = ADP-D-ribose + nicotinamide + H(+). The catalysed reaction is NAD(+) = cyclic ADP-beta-D-ribose + nicotinamide + H(+). The enzyme catalyses cyclic ADP-beta-D-ribose + H2O = ADP-D-ribose. Its function is as follows. Catalyzes both the synthesis of cyclic ADP-beta-D-ribose (cADPR) from NAD(+), and its hydrolysis to ADP-D-ribose (ADPR). Cyclic ADPR is known to serve as an endogenous second messenger that elicits calcium release from intracellular stores, and thus regulates the mobilization of intracellular calcium. May be involved in pre-B-cell growth. The polypeptide is ADP-ribosyl cyclase/cyclic ADP-ribose hydrolase 2 (Bst1) (Mus musculus (Mouse)).